The sequence spans 541 residues: Copper transport protein CutJ (541 aa).

Positions 1–25 (MKRNRWWIILLLFLVFLPKTSFAHA) are cleaved as a signal peptide. H24 and H110 together coordinate Cu cation. 8 helical membrane passes run 146 to 166 (AILYTALSLFIGTVFFHLFWY), 180 to 200 (ILTGSIAALGLALLLQLPIQT), 228 to 248 (SIWIIQAALFVLLALSVIPAI), 262 to 282 (PLIFFFGLLLAKAFTGHAAVV), 293 to 313 (FLHLTSASIWVGGIAALVLLL), 335 to 355 (WALTAVGVILFSGLLNGFFII), 370 to 390 (LLVKSGLFVFMLVLGAIHFLL), and 407 to 427 (WAIGIAVLITAAVFTSLPSPP).

In the N-terminal section; belongs to the CopC family. It in the C-terminal section; belongs to the CopD family.

It is found in the cell membrane. Its function is as follows. Involved in uptake of extracellular oxidized copper under copper-limiting conditions. The sequence is that of Copper transport protein CutJ from Bacillus subtilis (strain 168).